Here is a 186-residue protein sequence, read N- to C-terminus: Putative glutathione-dependent formaldehyde-activating enzyme (186 aa).

The CENP-V/GFA domain occupies 20 to 166 (FSGGKLRCKC…FKSIGLETYD (147 aa)). Residues cysteine 27, cysteine 29, cysteine 48, cysteine 50, cysteine 53, cysteine 95, and cysteine 98 each contribute to the Zn(2+) site.

This sequence belongs to the Gfa family. Zn(2+) is required as a cofactor.

The catalysed reaction is S-(hydroxymethyl)glutathione = glutathione + formaldehyde. It participates in one-carbon metabolism; formaldehyde degradation; formate from formaldehyde (glutathione route): step 1/3. Catalyzes the condensation of formaldehyde and glutathione to S-hydroxymethylglutathione. The sequence is that of Putative glutathione-dependent formaldehyde-activating enzyme from Fusarium vanettenii (strain ATCC MYA-4622 / CBS 123669 / FGSC 9596 / NRRL 45880 / 77-13-4) (Fusarium solani subsp. pisi).